We begin with the raw amino-acid sequence, 388 residues long: Chaperone protein DnaJ (388 aa).

Positions 5–70 constitute a J domain; sequence DYYEVLGVAR…QKRAAYDRFG (66 aa). The segment at 141–219 adopts a CR-type zinc-finger fold; that stretch reads GKTETIRLPT…CGGAGRVTRE (79 aa). The Zn(2+) site is built by C154, C157, C171, C174, C193, C196, C207, and C210. CXXCXGXG motif repeat units follow at residues 154–161, 171–178, 193–200, and 207–214; these read CEVCAGSG, CPTCGGYG, CPNCHGRG, and CTACGGAG.

Belongs to the DnaJ family. In terms of assembly, homodimer. It depends on Zn(2+) as a cofactor.

The protein resides in the cytoplasm. Its function is as follows. Participates actively in the response to hyperosmotic and heat shock by preventing the aggregation of stress-denatured proteins and by disaggregating proteins, also in an autonomous, DnaK-independent fashion. Unfolded proteins bind initially to DnaJ; upon interaction with the DnaJ-bound protein, DnaK hydrolyzes its bound ATP, resulting in the formation of a stable complex. GrpE releases ADP from DnaK; ATP binding to DnaK triggers the release of the substrate protein, thus completing the reaction cycle. Several rounds of ATP-dependent interactions between DnaJ, DnaK and GrpE are required for fully efficient folding. Also involved, together with DnaK and GrpE, in the DNA replication of plasmids through activation of initiation proteins. The protein is Chaperone protein DnaJ of Methylobacterium nodulans (strain LMG 21967 / CNCM I-2342 / ORS 2060).